Consider the following 191-residue polypeptide: Protein 2 in picA locus (191 aa).

The protein belongs to the acyltransferase 3 family.

The protein resides in the cell membrane. Functionally, seems to regulate the surface properties of the bacterium in the presence of plant cells or plant cell extracts. This Rhizobium radiobacter (Agrobacterium tumefaciens) protein is Protein 2 in picA locus.